Consider the following 363-residue polypeptide: Peptide chain release factor 2 (363 aa).

Gln-251 is modified (N5-methylglutamine).

This sequence belongs to the prokaryotic/mitochondrial release factor family. Post-translationally, methylated by PrmC. Methylation increases the termination efficiency of RF2.

It is found in the cytoplasm. Its function is as follows. Peptide chain release factor 2 directs the termination of translation in response to the peptide chain termination codons UGA and UAA. The chain is Peptide chain release factor 2 from Helicobacter acinonychis (strain Sheeba).